Consider the following 667-residue polypeptide: DNA ligase (667 aa).

Residues 32–36 (DSEYD), 81–82 (SL), and E110 each bind NAD(+). The N6-AMP-lysine intermediate role is filled by K112. NAD(+) is bound by residues R133, E167, K283, and K307. Zn(2+) contacts are provided by C401, C404, C419, and C424. The region spanning 586 to 667 (EGHPEFSGKT…FVDKQNELNS (82 aa)) is the BRCT domain.

It belongs to the NAD-dependent DNA ligase family. LigA subfamily. Mg(2+) is required as a cofactor. Mn(2+) serves as cofactor.

It catalyses the reaction NAD(+) + (deoxyribonucleotide)n-3'-hydroxyl + 5'-phospho-(deoxyribonucleotide)m = (deoxyribonucleotide)n+m + AMP + beta-nicotinamide D-nucleotide.. Its function is as follows. DNA ligase that catalyzes the formation of phosphodiester linkages between 5'-phosphoryl and 3'-hydroxyl groups in double-stranded DNA using NAD as a coenzyme and as the energy source for the reaction. It is essential for DNA replication and repair of damaged DNA. The protein is DNA ligase of Staphylococcus aureus (strain bovine RF122 / ET3-1).